Here is a 533-residue protein sequence, read N- to C-terminus: tRNA(Ile)-lysidine synthase (533 aa).

27–32 (SGGSDS) lines the ATP pocket.

It belongs to the tRNA(Ile)-lysidine synthase family.

The protein resides in the cytoplasm. The catalysed reaction is cytidine(34) in tRNA(Ile2) + L-lysine + ATP = lysidine(34) in tRNA(Ile2) + AMP + diphosphate + H(+). Ligates lysine onto the cytidine present at position 34 of the AUA codon-specific tRNA(Ile) that contains the anticodon CAU, in an ATP-dependent manner. Cytidine is converted to lysidine, thus changing the amino acid specificity of the tRNA from methionine to isoleucine. The polypeptide is tRNA(Ile)-lysidine synthase (Rickettsia peacockii (strain Rustic)).